An 89-amino-acid chain; its full sequence is Microcin N (89 aa).

The signal sequence occupies residues 1-15 (MRELDREELNCVGGA).

Belongs to the class IIa microcin family. Mass spectrometry suggests 3 of the 4 Met residues of the mature peptide are oxidized.

The protein resides in the secreted. In terms of biological role, active against E.coli and Salmonella, but not Listeria or Campylobacter. Channel-forming microcin. Probably neutralized by its immunity protein McnI. The protein is Microcin N of Escherichia coli.